The chain runs to 343 residues: Dihydroorotase (343 aa).

Histidine 13 and histidine 15 together coordinate Zn(2+). Residues 15 to 17 (HFR) and asparagine 41 contribute to the substrate site. Zn(2+)-binding residues include lysine 98, histidine 135, and histidine 173. Position 98 is an N6-carboxylysine (lysine 98). A substrate-binding site is contributed by histidine 135. Leucine 218 provides a ligand contact to substrate. Residue aspartate 246 participates in Zn(2+) binding. Residue aspartate 246 is part of the active site. Substrate contacts are provided by histidine 250 and alanine 262.

It belongs to the metallo-dependent hydrolases superfamily. DHOase family. Class II DHOase subfamily. As to quaternary structure, homodimer. It depends on Zn(2+) as a cofactor.

It catalyses the reaction (S)-dihydroorotate + H2O = N-carbamoyl-L-aspartate + H(+). The protein operates within pyrimidine metabolism; UMP biosynthesis via de novo pathway; (S)-dihydroorotate from bicarbonate: step 3/3. In terms of biological role, catalyzes the reversible cyclization of carbamoyl aspartate to dihydroorotate. The protein is Dihydroorotase of Marinomonas sp. (strain MWYL1).